The sequence spans 367 residues: Alanine racemase (367 aa).

Lysine 40 acts as the Proton acceptor; specific for D-alanine in catalysis. Lysine 40 is subject to N6-(pyridoxal phosphate)lysine. Arginine 136 lines the substrate pocket. Tyrosine 263 serves as the catalytic Proton acceptor; specific for L-alanine. Methionine 310 contacts substrate.

It belongs to the alanine racemase family. The cofactor is pyridoxal 5'-phosphate.

The catalysed reaction is L-alanine = D-alanine. It participates in amino-acid biosynthesis; D-alanine biosynthesis; D-alanine from L-alanine: step 1/1. In terms of biological role, catalyzes the interconversion of L-alanine and D-alanine. May also act on other amino acids. The polypeptide is Alanine racemase (alr) (Lactococcus lactis subsp. cremoris (strain SK11)).